The chain runs to 463 residues: Glutamyl-tRNA(Gln) amidotransferase subunit A, mitochondrial (463 aa).

Catalysis depends on charge relay system residues lysine 47 and serine 124. Catalysis depends on serine 148, which acts as the Acyl-ester intermediate.

Belongs to the amidase family. GatA subfamily. Subunit of the heterotrimeric GatFAB amidotransferase (AdT) complex, composed of A, B and F subunits.

It localises to the mitochondrion. It carries out the reaction L-glutamyl-tRNA(Gln) + L-glutamine + ATP + H2O = L-glutaminyl-tRNA(Gln) + L-glutamate + ADP + phosphate + H(+). Functionally, allows the formation of correctly charged Gln-tRNA(Gln) through the transamidation of misacylated Glu-tRNA(Gln) in the mitochondria. The reaction takes place in the presence of glutamine and ATP through an activated gamma-phospho-Glu-tRNA(Gln). This is Glutamyl-tRNA(Gln) amidotransferase subunit A, mitochondrial from Eremothecium gossypii (strain ATCC 10895 / CBS 109.51 / FGSC 9923 / NRRL Y-1056) (Yeast).